A 420-amino-acid chain; its full sequence is uncharacterized protein (420 aa).

2 disordered regions span residues 84–103 (RSQANSESTPPEHTWSGTSE) and 122–211 (SMNN…NKKS). Polar residues predominate over residues 85 to 103 (SQANSESTPPEHTWSGTSE). Residues 184-199 (SMTDQEVEQRRKEANK) show a composition bias toward basic and acidic residues. Coiled-coil stretches lie at residues 265 to 310 (TEKE…TATN) and 345 to 374 (LQFKIKKFERREKLLEEVENQIKQYFNFKE). A compositionally biased stretch (polar residues) spans 399-408 (KTSSPKTSIA). The disordered stretch occupies residues 399–420 (KTSSPKTSIAGSHRRSTRSSEN). The segment covering 410–420 (SHRRSTRSSEN) has biased composition (basic residues).

This is an uncharacterized protein from Caenorhabditis elegans.